The sequence spans 1049 residues: Toll-like receptor 7 (1049 aa).

The first 26 residues, 1-26, serve as a signal peptide directing secretion; sequence MVFPMWTLKRQILILFNIILISKLLG. The Extracellular portion of the chain corresponds to 27–839; sequence ARWFPKTLPC…LYTCELDLTN (813 aa). 6 LRR repeats span residues 43–64, 65–87, 110–126, 127–149, 151–170, and 171–195; these read PKNH…GGIP, TNTT…SFHR, NMCI…FSGL, TYLK…LPPS, QLLS…NLTE, and LANI…SYSI. 2 N-linked (GlcNAc...) asparagine glycosylation sites follow: asparagine 66 and asparagine 69. The N-linked (GlcNAc...) asparagine glycan is linked to asparagine 167. 2 N-linked (GlcNAc...) asparagine glycosylation sites follow: asparagine 202 and asparagine 215. LRR repeat units follow at residues 203–226, 228–247, 248–275, 289–312, 314–337, 339–368, 369–392, 396–419, and 421–443; these read LTKL…LPST, TELY…DFNN, LNQL…PCKN, LTEL…WFKN, NKLQ…KFLH, LPSL…AFSS, LKSL…NLSP, LQNL…MFKQ, and KRLK…SEVG. N-linked (GlcNAc...) asparagine glycosylation is present at asparagine 361. A glycan (N-linked (GlcNAc...) asparagine) is linked at asparagine 413. Asparagine 488 carries an N-linked (GlcNAc...) asparagine glycan. LRR repeat units follow at residues 492 to 515, 516 to 540, 541 to 564, and 566 to 588; these read YKYG…DFQH, LSFL…EFQP, LAEL…AFEE, and HKLE…ITHM. N-linked (GlcNAc...) asparagine glycosylation is found at asparagine 523 and asparagine 534. Asparagine 590 carries N-linked (GlcNAc...) asparagine glycosylation. LRR repeat units follow at residues 595–618, 619–644, 649–672, 674–697, 698–721, 723–745, 746–769, and 772–795; these read LKVL…TMES, ESLR…RYLQ, LLKL…VFDG, PPNL…KLQC, LKNL…LSNC, RSLK…FLQD, AFQL…SFPE, and LNNL…VWFV. N-linked (GlcNAc...) asparagine glycans are attached at residues asparagine 679 and asparagine 720. Asparagine 799 carries N-linked (GlcNAc...) asparagine glycosylation. A helical membrane pass occupies residues 840–860; it reads LILFSLSISVSLFLMVMMTAS. At 861–1049 the chain is on the cytoplasmic side; the sequence is HLYFWDVWYI…AYSQVFKETV (189 aa). Residues 889–1033 enclose the TIR domain; it reads CCYDAFIVYD…YFWQCLKNAL (145 aa).

It belongs to the Toll-like receptor family. Homodimer. Interacts with MYD88 via their respective TIR domains. Interacts with UNC93B1. Interacts with SMPDL3B. In terms of tissue distribution, detected in brain, placenta, spleen, stomach, small intestine, lung and in plasmacytoid pre-dendritic cells. Expressed in peripheral mononuclear blood cells.

The protein resides in the endoplasmic reticulum membrane. It is found in the endosome. It localises to the lysosome. Its subcellular location is the cytoplasmic vesicle. The protein localises to the phagosome. With respect to regulation, activated by guanosine analogs including deoxyguanosine, 7-thia-8-oxoguanosine or 7-deazaguanosine in a RNA-independent manner. Activated by imiquimod. In terms of biological role, endosomal receptor that plays a key role in innate and adaptive immunity. Controls host immune response against pathogens through recognition of uridine-containing single strand RNAs (ssRNAs) of viral origin or guanosine analogs. Upon binding to agonists, undergoes dimerization that brings TIR domains from the two molecules into direct contact, leading to the recruitment of TIR-containing downstream adapter MYD88 through homotypic interaction. In turn, the Myddosome signaling complex is formed involving IRAK4, IRAK1, TRAF6, TRAF3 leading to activation of downstream transcription factors NF-kappa-B and IRF7 to induce pro-inflammatory cytokines and interferons, respectively. In plasmacytoid dendritic cells, RNASET2 endonuclease cooperates with PLD3 or PLD4 5'-&gt;3' exonucleases to process RNA and release 2',3'-cyclic guanosine monophosphate (2',3'-cGMP) and cytidine-rich RNA fragments that occupy TLR7 ligand-binding pockets and trigger a signaling-competent state. The protein is Toll-like receptor 7 of Homo sapiens (Human).